A 397-amino-acid chain; its full sequence is 2,6-dihydroxypyridine 3-monooxygenase (397 aa).

FAD contacts are provided by residues 14–16 (SIS), 35–36 (ER), valine 49, leucine 120, aspartate 306, and 316–320 (AAGGA).

As to quaternary structure, homodimer. Requires FAD as cofactor.

It carries out the reaction 2,6-dihydroxypyridine + NADH + O2 + H(+) = 2,3,6-trihydroxypyridine + NAD(+) + H2O. The protein operates within alkaloid degradation; nicotine degradation. Its function is as follows. Catalyzes the conversion of 2,6-dihydroxypyridine into 2,3,6-trihydroxypyridine in the nicotine degradation pathway. The polypeptide is 2,6-dihydroxypyridine 3-monooxygenase (dhpH) (Paenarthrobacter nicotinovorans (Arthrobacter nicotinovorans)).